Consider the following 393-residue polypeptide: L-rhamnonate dehydratase (393 aa).

Positions 22 and 48 each coordinate substrate. Mg(2+) is bound by residues D214, E241, and E269. Catalysis depends on H319, which acts as the Proton acceptor. E339 is a substrate binding site.

This sequence belongs to the mandelate racemase/muconate lactonizing enzyme family. RhamD subfamily. In terms of assembly, homooctamer; tetramer of dimers. Mg(2+) serves as cofactor.

The enzyme catalyses L-rhamnonate = 2-dehydro-3-deoxy-L-rhamnonate + H2O. In terms of biological role, catalyzes the dehydration of L-rhamnonate to 2-keto-3-deoxy-L-rhamnonate (KDR). This is L-rhamnonate dehydratase from Azorhizobium caulinodans (strain ATCC 43989 / DSM 5975 / JCM 20966 / LMG 6465 / NBRC 14845 / NCIMB 13405 / ORS 571).